Consider the following 252-residue polypeptide: uncharacterized protein (252 aa).

Belongs to the LarE family.

This is an uncharacterized protein from Methanocaldococcus jannaschii (strain ATCC 43067 / DSM 2661 / JAL-1 / JCM 10045 / NBRC 100440) (Methanococcus jannaschii).